A 1630-amino-acid polypeptide reads, in one-letter code: Separin (1630 aa).

The segment at 1016–1037 (SKHSTGLKLCDSPRSSSMTPRG) is disordered. The region spanning 1443 to 1542 (EDNISMILNP…SAAMKYYGKL (100 aa)) is the Peptidase C50 domain. Residue C1531 is part of the active site.

As to quaternary structure, may bind calcium. Interacts with PDS1. Interacts with MCD1.

Its subcellular location is the nucleus. The protein resides in the cytoplasm. It is found in the cytoskeleton. It localises to the microtubule organizing center. The protein localises to the spindle pole body. The catalysed reaction is All bonds known to be hydrolyzed by this endopeptidase have arginine in P1 and an acidic residue in P4. P6 is often occupied by an acidic residue or by a hydroxy-amino-acid residue, the phosphorylation of which enhances cleavage.. It is inactivated via its interaction with PDS1, which probably covers its active site. PDS1 degradation at anaphase, liberates it and triggers MCD1 cleavage. Caspase-like protease, which plays a central role in the chromosome segregation by cleaving the MCD1/SCC1 subunit of the cohesin complex at the onset of anaphase. During most of the cell cycle, it is inactivated by securin/PDS1 protein. It also promotes anaphase spindle elongation. A component of the FEAR (CDC14 early anaphase release) network which promotes CDC14 release from the nucleolus during early anaphase. Cleaves SLK19. This chain is Separin (ESP1), found in Saccharomyces cerevisiae (strain ATCC 204508 / S288c) (Baker's yeast).